The primary structure comprises 145 residues: uncharacterized protein (145 aa).

A compositionally biased stretch (basic and acidic residues) spans 1 to 18 (MAEQQPSKEEKKEDKKDE). Residues 1-61 (MAEQQPSKEE…CTEGEWDASD (61 aa)) are disordered.

This is an uncharacterized protein from Caenorhabditis elegans.